A 426-amino-acid chain; its full sequence is High affinity 3',5'-cyclic-AMP phosphodiesterase 7A (426 aa).

Positions 80–402 constitute a PDEase domain; sequence LDEDYNGQAK…ASWKGLQRQQ (323 aa). Histidine 156 functions as the Proton donor in the catalytic mechanism. A divalent metal cation-binding residues include histidine 160, histidine 196, aspartate 197, and aspartate 306.

The protein belongs to the cyclic nucleotide phosphodiesterase family. PDE7 subfamily. Interacts with CBFA2T3. The cofactor is a divalent metal cation.

The protein resides in the cytoplasm. The protein localises to the cytosol. It catalyses the reaction 3',5'-cyclic AMP + H2O = AMP + H(+). It functions in the pathway purine metabolism; 3',5'-cyclic AMP degradation; AMP from 3',5'-cyclic AMP: step 1/1. Its function is as follows. Hydrolyzes the second messenger cAMP, which is a key regulator of many important physiological processes. May have a role in muscle signal transduction. The chain is High affinity 3',5'-cyclic-AMP phosphodiesterase 7A (Pde7a) from Rattus norvegicus (Rat).